The following is a 165-amino-acid chain: Cysteine-rich hydrophobic domain-containing protein 2 (165 aa).

A coiled-coil region spans residues 1-26; the sequence is MADFDEIYEEEEDEERALEEQLLKYS. Residues 88 to 106 carry the CHIC motif (Cys-rich) motif; that stretch reads CGCLCCCCTLGCSMWPVIC.

This sequence belongs to the CHIC family. Palmitoylation in the CHIC motif is required for membrane association.

The protein resides in the membrane. It is found in the golgi apparatus. This Mus musculus (Mouse) protein is Cysteine-rich hydrophobic domain-containing protein 2 (Chic2).